We begin with the raw amino-acid sequence, 476 residues long: Glutathione synthetase (476 aa).

R117 is a binding site for substrate. E137 contacts ATP. The Mg(2+) site is built by E137 and N139. Residues 141-144, 211-213, Q217, and 267-270 each bind substrate; these read ISSS, ERN, and RAGY. ATP is bound by residues K308, 367–376, Y378, 400–403, and E426; these read KPQREGGGNN and MDKI. E371 contacts Mg(2+). R452 is a binding site for substrate. The ATP site is built by K454 and E460. 463 to 464 contacts substrate; that stretch reads VA.

Belongs to the eukaryotic GSH synthase family. In terms of assembly, homodimer. Mg(2+) is required as a cofactor.

It carries out the reaction gamma-L-glutamyl-L-cysteine + glycine + ATP = glutathione + ADP + phosphate + H(+). It participates in sulfur metabolism; glutathione biosynthesis; glutathione from L-cysteine and L-glutamate: step 2/2. This Dictyostelium discoideum (Social amoeba) protein is Glutathione synthetase (gshB).